The primary structure comprises 967 residues: Vitamin B12-dependent ribonucleotide reductase (967 aa).

The tract at residues 1–23 (MTETASGPARSSRAKGTKAGKGL) is disordered. Substrate is bound by residues Ser-143, 159-160 (AC), Gly-188, 364-368 (NPCSE), and 554-558 (PTGTI). Cys-160 and Cys-377 form a disulfide bridge. Asn-364 functions as the Proton acceptor in the catalytic mechanism. The active-site Cysteine radical intermediate is Cys-366. Glu-368 functions as the Proton acceptor in the catalytic mechanism.

The protein belongs to the ribonucleoside diphosphate reductase class-2 family. Adenosylcob(III)alamin serves as cofactor.

It catalyses the reaction a 2'-deoxyribonucleoside 5'-diphosphate + [thioredoxin]-disulfide + H2O = a ribonucleoside 5'-diphosphate + [thioredoxin]-dithiol. In terms of biological role, catalyzes the reduction of ribonucleotides to deoxyribonucleotides. May function to provide a pool of deoxyribonucleotide precursors for DNA repair during oxygen limitation and/or for immediate growth after restoration of oxygen. In Streptomyces coelicolor (strain ATCC BAA-471 / A3(2) / M145), this protein is Vitamin B12-dependent ribonucleotide reductase (nrdJ).